A 160-amino-acid polypeptide reads, in one-letter code: Putative tRNA (cytidine(34)-2'-O)-methyltransferase (160 aa).

S-adenosyl-L-methionine-binding residues include Ile82, Gly107, Leu128, and Ser136.

The protein belongs to the class IV-like SAM-binding methyltransferase superfamily. RNA methyltransferase TrmH family. TrmL subfamily.

The protein resides in the cytoplasm. It carries out the reaction cytidine(34) in tRNA + S-adenosyl-L-methionine = 2'-O-methylcytidine(34) in tRNA + S-adenosyl-L-homocysteine + H(+). The catalysed reaction is 5-carboxymethylaminomethyluridine(34) in tRNA(Leu) + S-adenosyl-L-methionine = 5-carboxymethylaminomethyl-2'-O-methyluridine(34) in tRNA(Leu) + S-adenosyl-L-homocysteine + H(+). Functionally, could methylate the ribose at the nucleotide 34 wobble position in tRNA. This Bacillus subtilis (strain 168) protein is Putative tRNA (cytidine(34)-2'-O)-methyltransferase (cspR).